Here is a 284-residue protein sequence, read N- to C-terminus: 2-dehydro-3-deoxyphosphooctonate aldolase (284 aa).

The protein belongs to the KdsA family.

It is found in the cytoplasm. It catalyses the reaction D-arabinose 5-phosphate + phosphoenolpyruvate + H2O = 3-deoxy-alpha-D-manno-2-octulosonate-8-phosphate + phosphate. It functions in the pathway carbohydrate biosynthesis; 3-deoxy-D-manno-octulosonate biosynthesis; 3-deoxy-D-manno-octulosonate from D-ribulose 5-phosphate: step 2/3. The protein operates within bacterial outer membrane biogenesis; lipopolysaccharide biosynthesis. In Aliivibrio salmonicida (strain LFI1238) (Vibrio salmonicida (strain LFI1238)), this protein is 2-dehydro-3-deoxyphosphooctonate aldolase.